A 283-amino-acid polypeptide reads, in one-letter code: Putative 4-diphosphocytidyl-2-C-methyl-D-erythritol kinase (283 aa).

The active site involves Lys-11. Residue 95–105 (PVCAGMGGGSS) participates in ATP binding. Asp-137 is a catalytic residue.

It belongs to the GHMP kinase family. IspE subfamily.

The enzyme catalyses 4-CDP-2-C-methyl-D-erythritol + ATP = 4-CDP-2-C-methyl-D-erythritol 2-phosphate + ADP + H(+). Its function is as follows. Catalyzes the phosphorylation of the position 2 hydroxy group of 4-diphosphocytidyl-2C-methyl-D-erythritol. The sequence is that of Putative 4-diphosphocytidyl-2-C-methyl-D-erythritol kinase from Streptococcus equi subsp. equi (strain 4047).